The primary structure comprises 364 residues: Peptide chain release factor 2 (364 aa).

Position 251 is an N5-methylglutamine (Gln-251).

It belongs to the prokaryotic/mitochondrial release factor family. Methylated by PrmC. Methylation increases the termination efficiency of RF2.

The protein localises to the cytoplasm. Functionally, peptide chain release factor 2 directs the termination of translation in response to the peptide chain termination codons UGA and UAA. This is Peptide chain release factor 2 from Sulfurovum sp. (strain NBC37-1).